Consider the following 868-residue polypeptide: MADVTVKQLAQVVGIPVERLLNQLQEAGLSFTDDQQTVNEEQKRILLNHLKGSSNRDISAAPERITLRRKSMSQVTVGHDMHSGKTVNIEVRKKKTFIKRSAIPEQAEVEEPVVPPVVEEPAHEEITVVSEVSADTSELKETEEHPVIEPVAALDETVKEEEKINSEENTAESQDELTHANTDVIENLVDVVEEAIPVSKKEEVKPEKVSKKKHLEQTDSDISEFKKGKKKPKYHTFEHDEEEQELHRRGGRSKFKKKKGTEKSDKYREAEETLTHGFALPTAPIVREVLIPETITVAELAKRMSVKAAEVIKVMMSLGAMATINQVIDQETSVIVVEEMGHKPVIIKEDAVETGLGEAISKGTKTEGRAPVVTIMGHVDHGKTSLLDYIRRTKVAAGEAGGITQHIGAYHVSTPKGDITFLDTPGHAAFTAMRARGAQATDIVILIVAADDGVKPQTIEAIQHAKAAKVPIIVAINKMDKPDADPERVMNELSVQEVIPEAWGGDTMFVNISAKSGMGIDDLLDAILLQSEVLELKAVTDGAAKGVVIESRLDKGRGPVATVLVQSGTLHKGDILLAGFQYGRVRALVSDNGDLVDSAGPSIPVEVLGLSAIPHAGDEAVVVPDEKKAREVALFRQGRFRDVKLARRQKTTIEGIMENMTATESKVLNIVLKADVQGSLEAISDALTKLSTDEVKVEVISSGVGGITESDVHLAIASNAILIGFNVRADGTAKRLAEQESVSIHYYSVIYDIVDQIKGALTGMLAPQFKEEIVGIAEVRDVFKSPKIGAIAGCMVIEGVVKRNNPIRVLRSNVVIYEGTLESLRRFKDDVLEVRQGFECGIGVKNYNDVKPGDLIEVFETVEIKRDL.

Disordered stretches follow at residues 158–178 and 200–269; these read VKEE…DELT and KKEE…KYRE. The span at 200–209 shows a compositional bias: basic and acidic residues; sequence KKEEVKPEKV. A compositionally biased stretch (basic residues) spans 249-260; the sequence is RGGRSKFKKKKG. One can recognise a tr-type G domain in the interval 368–537; the sequence is GRAPVVTIMG…LLQSEVLELK (170 aa). The interval 377 to 384 is G1; it reads GHVDHGKT. GTP is bound at residue 377 to 384; that stretch reads GHVDHGKT. A G2 region spans residues 402-406; that stretch reads GITQH. Residues 423-426 are G3; the sequence is DTPG. Residues 423–427 and 477–480 each bind GTP; these read DTPGH and NKMD. The G4 stretch occupies residues 477 to 480; that stretch reads NKMD. The G5 stretch occupies residues 513–515; the sequence is SAK.

This sequence belongs to the TRAFAC class translation factor GTPase superfamily. Classic translation factor GTPase family. IF-2 subfamily.

Its subcellular location is the cytoplasm. In terms of biological role, one of the essential components for the initiation of protein synthesis. Protects formylmethionyl-tRNA from spontaneous hydrolysis and promotes its binding to the 30S ribosomal subunits. Also involved in the hydrolysis of GTP during the formation of the 70S ribosomal complex. This chain is Translation initiation factor IF-2, found in Legionella pneumophila (strain Lens).